The following is a 485-amino-acid chain: RAC-beta serine/threonine-protein kinase B (485 aa).

The PH domain occupies 5 to 109 (MVIKEGWLQK…WIIAIQTVAN (105 aa)). 2 O-linked (GlcNAc) serine glycosylation sites follow: S132 and S135. A Protein kinase domain is found at 156–413 (FDYLKLLGKG…AQEVMSHGFF (258 aa)). Residues 162-170 (LGKGTFGKV) and K185 each bind ATP. Residue D279 is the Proton acceptor of the active site. Residue T310 is glycosylated (O-linked (GlcNAc) threonine). Position 313 is a phosphothreonine (T313). A glycan (O-linked (GlcNAc) threonine) is linked at T317. The 72-residue stretch at 414–485 (ASINWQDVTE…QFSYSSSIRE (72 aa)) folds into the AGC-kinase C-terminal domain. The segment at 454 to 485 (LTPPDRYDNLDALESEQRPHFPQFSYSSSIRE) is disordered. Over residues 458–472 (DRYDNLDALESEQRP) the composition is skewed to basic and acidic residues. A Phosphoserine modification is found at S478. S478 carries O-linked (GlcNAc) serine; alternate glycosylation.

The protein belongs to the protein kinase superfamily. AGC Ser/Thr protein kinase family. RAC subfamily. In terms of processing, phosphorylation on Thr-313 and Ser-478 is required for full activity. Phosphorylation of the activation loop at Thr-313 by PDPK1/PDK1 is a prerequisite for full activation. Phosphorylation by mTORC2 at Ser-478 in response to growth factors plays a key role in AKT1 activation by facilitating subsequent phosphorylation of the activation loop by PDPK1/PDK1.

It carries out the reaction L-seryl-[protein] + ATP = O-phospho-L-seryl-[protein] + ADP + H(+). The catalysed reaction is L-threonyl-[protein] + ATP = O-phospho-L-threonyl-[protein] + ADP + H(+). Two specific sites, one in the kinase domain (Thr-313) and the other in the C-terminal regulatory region (Ser-478), need to be phosphorylated for its full activation. Akt2-b is one of several closely related serine/threonine-protein kinases known as the AKT kinase, and which regulate many processes including metabolism, proliferation, cell survival, growth and angiogenesis. This is mediated through serine and/or threonine phosphorylation of a range of downstream substrates. Over 100 substrate candidates have been reported so far, but for most of them, no isoform specificity has been reported. May be involved in the inhibition of ciliogenesis. The sequence is that of RAC-beta serine/threonine-protein kinase B (akt2-b) from Xenopus laevis (African clawed frog).